Reading from the N-terminus, the 154-residue chain is Protein X (154 aa).

The segment at 28 to 48 is disordered; that stretch reads RTLPGSLGAVPPPSSSAVPAD. Residues 30–46 are compositionally biased toward low complexity; the sequence is LPGSLGAVPPPSSSAVP. The interval 68 to 117 is mitochondrial targeting sequence; it reads PCALRFTSARRMETTVNAPWSLPTVLHKRTLGLSGRSMTWIEDYIKDCVF.

It belongs to the orthohepadnavirus protein X family. May form homodimer. May interact with host CEBPA, CFLAR, CREB1, DDB1, E4F1, HBXIP, HSPD1/HSP60, NFKBIA, POLR2E and SMAD4. Interacts with host SMC5-SMC6 complex and induces its degradation. Interacts with host TRPC4AP; leading to prevent ubiquitination of TRPC4AP. Interacts with host PLSCR1; this interaction promotes ubiquitination and degradation of HBx and impairs HBx-mediated cell proliferation. Post-translationally, a fraction may be phosphorylated in insect cells and HepG2 cells, a human hepatoblastoma cell line. Phosphorylated in vitro by host protein kinase C or mitogen-activated protein kinase. N-acetylated in insect cells.

The protein resides in the host cytoplasm. The protein localises to the host nucleus. It localises to the host mitochondrion. In terms of biological role, multifunctional protein that plays a role in silencing host antiviral defenses and promoting viral transcription. Does not seem to be essential for HBV infection. May be directly involved in development of cirrhosis and liver cancer (hepatocellular carcinoma). Most of cytosolic activities involve modulation of cytosolic calcium. The effect on apoptosis is controversial depending on the cell types in which the studies have been conducted. May induce apoptosis by localizing in mitochondria and causing loss of mitochondrial membrane potential. May also modulate apoptosis by binding host CFLAR, a key regulator of the death-inducing signaling complex (DISC). Promotes viral transcription by using the host E3 ubiquitin ligase DDB1 to target the SMC5-SMC6 complex to proteasomal degradation. This host complex would otherwise bind to viral episomal DNA, and prevents its transcription. Moderately stimulates transcription of many different viral and cellular transcription elements. Promoters and enhancers stimulated by HBx contain DNA binding sites for NF-kappa-B, AP-1, AP-2, c-EBP, ATF/CREB, or the calcium-activated factor NF-AT. This chain is Protein X, found in Homo sapiens (Human).